Reading from the N-terminus, the 231-residue chain is Octanoyl-[acyl-carrier-protein]:protein N-octanoyltransferase LIPT2, mitochondrial (231 aa).

The region spanning 41-224 (GTKAGVLLVC…AFKETFKCTL (184 aa)) is the BPL/LPL catalytic domain. Residue K43 is modified to N6-succinyllysine. Substrate-binding positions include 85 to 92 (RGGLATFH), 154 to 156 (AIG), and 167 to 169 (GLA). C185 (acyl-thioester intermediate) is an active-site residue.

It belongs to the LipB family.

The protein resides in the mitochondrion. The catalysed reaction is octanoyl-[ACP] + L-lysyl-[protein] = N(6)-octanoyl-L-lysyl-[protein] + holo-[ACP] + H(+). It participates in protein modification; protein lipoylation via endogenous pathway; protein N(6)-(lipoyl)lysine from octanoyl-[acyl-carrier-protein]: step 1/2. Catalyzes the transfer of endogenously produced octanoic acid from octanoyl-acyl-carrier-protein onto the lipoyl domains of lipoate-dependent enzymes such as the protein H of the glycine cleavage system (GCSH). Lipoyl-ACP can also act as a substrate although octanoyl-ACP is likely to be the physiological substrate. The sequence is that of Octanoyl-[acyl-carrier-protein]:protein N-octanoyltransferase LIPT2, mitochondrial from Mus musculus (Mouse).